The primary structure comprises 153 residues: UPF0756 membrane protein lin1603 (153 aa).

A run of 4 helical transmembrane segments spans residues 6-26, 54-74, 80-100, and 117-137; these read MLFL…SLII, WGVT…QIGF, SFKS…SILA, and LVFG…GPVI.

This sequence belongs to the UPF0756 family.

It localises to the cell membrane. The chain is UPF0756 membrane protein lin1603 from Listeria innocua serovar 6a (strain ATCC BAA-680 / CLIP 11262).